A 747-amino-acid polypeptide reads, in one-letter code: AT-rich interactive domain-containing protein 4 (747 aa).

The interval 454-475 (PLPTRKRSEPCRESKEIENGGP) is disordered. Positions 459 to 471 (KRSEPCRESKEIE) are enriched in basic and acidic residues. The region spanning 566-670 (VCSEEEFLRD…YLLEYEYAHD (105 aa)) is the ARID domain. The PHD-type zinc-finger motif lies at 674–730 (GECCLICRSSTAGDWVNCGSCGEWAHFGCDRRPGLGAFKDYAKTDGLEYVCPNCSVS).

It is found in the nucleus. In Arabidopsis thaliana (Mouse-ear cress), this protein is AT-rich interactive domain-containing protein 4 (ARID4).